The chain runs to 309 residues: Probable manganese-dependent inorganic pyrophosphatase (309 aa).

Mn(2+)-binding residues include histidine 9, aspartate 13, aspartate 15, aspartate 75, histidine 97, and aspartate 149.

The protein belongs to the PPase class C family. Mn(2+) serves as cofactor.

It is found in the cytoplasm. It carries out the reaction diphosphate + H2O = 2 phosphate + H(+). The chain is Probable manganese-dependent inorganic pyrophosphatase from Exiguobacterium sp. (strain ATCC BAA-1283 / AT1b).